A 241-amino-acid polypeptide reads, in one-letter code: MEKFAPEFHGEDANNRATKFLESIKGKFTSPKDPKKKDSIISVNSIDIEVTKESPITSNSTIINPTNETDDTAGNKPNYQRKPLVSFKEDPTPSDNPFSKLYKETIETFDNNEEESSYSYEEINDQTNDNITARLDRIDEKLSEILGMLHTLVVASAGPTSARDGIRDAMIGLREEMIEKIRTEALMTNDRLEAMARLRNEESEKMAKDTSDEVSLNPTSEKLNNLLEGNDSDNDLSLEDF.

Residues 1–30 are binding to monomeric RNA-free nucleoprotein; it reads MEKFAPEFHGEDANNRATKFLESIKGKFTS. Positions 39 to 57 are important for viral particle assembly; the sequence is SIISVNSIDIEVTKESPIT. A compositionally biased stretch (polar residues) spans 58-67; that stretch reads SNSTIINPTN. The disordered stretch occupies residues 58-78; the sequence is SNSTIINPTNETDDTAGNKPN. Positions 81 to 87 are binding to host phosphatase PP1; it reads RKPLVSF. A binding to protein M2-1 region spans residues 90-110; sequence DPTPSDNPFSKLYKETIETFD. A Phosphothreonine; by host modification is found at T108. A phosphoserine; by host mark is found at S116, S117, and S119. An oligomerization and binding to RNA-directed RNA polymerase L region spans residues 120–160; that stretch reads YEEINDQTNDNITARLDRIDEKLSEILGMLHTLVVASAGPT. Residues 201–211 show a composition bias toward basic and acidic residues; that stretch reads EESEKMAKDTS. The interval 201–241 is disordered; the sequence is EESEKMAKDTSDEVSLNPTSEKLNNLLEGNDSDNDLSLEDF. The segment covering 213 to 223 has biased composition (polar residues); it reads EVSLNPTSEKL. The tract at residues 216-232 is binding to RNA-directed RNA polymerase L; the sequence is LNPTSEKLNNLLEGNDS. Residues 230–241 are compositionally biased toward acidic residues; the sequence is NDSDNDLSLEDF. Residues S232 and S237 each carry the phosphoserine; by host modification. The segment at 232–241 is binding to the N-RNA complex; sequence SDNDLSLEDF.

This sequence belongs to the pneumoviridae phosphoprotein P family. Homotetramer. Interacts with protein M2-1; the interaction between the two tetramers is required for the anti-termination and elongation transcriptional activities of protein M2-1. Interacts with host phosphatase PP1; this interaction recruits PP1 to the inclusion bodies. Formation of a complex PP1/M2-1/P allows P to target host PP1 phosphatase to the M2-1 substrate. Interacts (via C-terminus) with the nucleoprotein N (via N-terminus); the phosphorylated phosphoprotein P binds to N-RNA complex. Interacts (via N-terminus) with the monomeric RNA-free nucleoprotein N. Interacts (via C-terminus) with RNA-directed RNA polymerase L; the association of P and L forms the polymerase complex. Post-translationally, constitutively phosphorylated by host. Phosphorylation at S-116, S-117, S-119, S-232 and S-237 is required for transcription inhibition by M2-2 and viral particle egress. Phosphorylation at S-232 and S-237 increases the affinity of the binding to the nucleoprotein.

It is found in the virion. It localises to the host cytoplasm. In terms of biological role, plays critical roles in regulating RNA replication and transcription through its interactions with multiple proteins. Tethers the RNA-directed RNA polymerase L to the nucleoprotein-RNA complex. Recruits the M2-1 protein, a processivity factor that is required for efficient transcription of viral RNA. Acts as a chaperone for neo-synthesized nucleoprotein by forming an N-P complex that preserves N in a monomeric and RNA-free state and prevents the association of nascent N with host cell RNAs. Recruits the host phosphatase PP1 to inclusion bodies to regulate viral transcription. Together with the nucleoprotein, sequesters host NF-kappa-B in inclusion bodies (IBs) thereby inhibiting this host defense pathway. The chain is Phosphoprotein (P) from Homo sapiens (Human).